The chain runs to 521 residues: GMP synthase [glutamine-hydrolyzing] (521 aa).

Residues 5–197 form the Glutamine amidotransferase type-1 domain; it reads KILILDFGSQ…VLDICGAQPG (193 aa). Residue C81 is the Nucleophile of the active site. Catalysis depends on residues H171 and E173. The region spanning 198–390 is the GMPS ATP-PPase domain; the sequence is WTMPNYIEEA…LGLPREMVYR (193 aa). Residue 225–231 participates in ATP binding; that stretch reads SGGVDSS.

In terms of assembly, homodimer.

The enzyme catalyses XMP + L-glutamine + ATP + H2O = GMP + L-glutamate + AMP + diphosphate + 2 H(+). Its pathway is purine metabolism; GMP biosynthesis; GMP from XMP (L-Gln route): step 1/1. In terms of biological role, catalyzes the synthesis of GMP from XMP. In Neisseria meningitidis serogroup C (strain 053442), this protein is GMP synthase [glutamine-hydrolyzing].